A 344-amino-acid chain; its full sequence is MLRVESVSKDYKEFKLRDISFDVKKEEHFIILGPSGAGKTVLLEIIAGIIEPDEGRIILNGVDVTSYPPEKRNLAYIPQDYALFPHMTVYDNIAFGLKLRRISRQEIDRKVKEISKVLGIEHLLHRKPRTLSGGEKQRVAIARALVIEPELLLLDEPFANLDVQTKSRFMTEMKVWRKELGFTSLHVTHSFEEAISLGDRVGVMLRGRLVQVGDVKEVFSNPVDEGVARFLGFENIIEGVAKGNILEANGVKITLPISVEGKVRIGVRPEDIILSTEPVKTSARNEFRAEVIGIEELGPLVRVNLKIGGITLKAFITRSSLIELGISEGREVYVSFKTSAIKVF.

The region spanning 2–231 (LRVESVSKDY…PVDEGVARFL (230 aa)) is the ABC transporter domain. 33-40 (GPSGAGKT) is a binding site for ATP. The Mop domain occupies 280–344 (KTSARNEFRA…SFKTSAIKVF (65 aa)).

The protein belongs to the ABC transporter superfamily. Sulfate/tungstate importer (TC 3.A.1.6) family. In terms of assembly, the complex is composed of two ATP-binding proteins (WtpC), two transmembrane proteins (WtpB) and a solute-binding protein (WtpA).

Its subcellular location is the cell membrane. It catalyses the reaction tungstate(in) + ATP + H2O = tungstate(out) + ADP + phosphate + H(+). Part of the ABC transporter complex WtpABC involved in molybdate/tungstate import. Responsible for energy coupling to the transport system. This chain is Molybdate/tungstate import ATP-binding protein WtpC (wtpC), found in Pyrococcus abyssi (strain GE5 / Orsay).